The primary structure comprises 305 residues: Aspartate carbamoyltransferase catalytic subunit (305 aa).

Residues arginine 58 and threonine 59 each contribute to the carbamoyl phosphate site. Lysine 86 lines the L-aspartate pocket. Carbamoyl phosphate is bound by residues arginine 108, histidine 136, and glutamine 139. Residues arginine 169 and arginine 223 each contribute to the L-aspartate site. Positions 264 and 265 each coordinate carbamoyl phosphate.

It belongs to the aspartate/ornithine carbamoyltransferase superfamily. ATCase family. As to quaternary structure, heterododecamer (2C3:3R2) of six catalytic PyrB chains organized as two trimers (C3), and six regulatory PyrI chains organized as three dimers (R2).

It carries out the reaction carbamoyl phosphate + L-aspartate = N-carbamoyl-L-aspartate + phosphate + H(+). Its pathway is pyrimidine metabolism; UMP biosynthesis via de novo pathway; (S)-dihydroorotate from bicarbonate: step 2/3. Functionally, catalyzes the condensation of carbamoyl phosphate and aspartate to form carbamoyl aspartate and inorganic phosphate, the committed step in the de novo pyrimidine nucleotide biosynthesis pathway. In Syntrophobacter fumaroxidans (strain DSM 10017 / MPOB), this protein is Aspartate carbamoyltransferase catalytic subunit.